A 166-amino-acid chain; its full sequence is Thiol peroxidase (166 aa).

The Thioredoxin domain maps to 18 to 166; sequence LKVGDKAPDV…NYEALLKVLK (149 aa). C60 functions as the Cysteine sulfenic acid (-SOH) intermediate in the catalytic mechanism. A disulfide bridge connects residues C60 and C94.

Belongs to the peroxiredoxin family. Tpx subfamily. Homodimer.

The catalysed reaction is a hydroperoxide + [thioredoxin]-dithiol = an alcohol + [thioredoxin]-disulfide + H2O. In terms of biological role, thiol-specific peroxidase that catalyzes the reduction of hydrogen peroxide and organic hydroperoxides to water and alcohols, respectively. Plays a role in cell protection against oxidative stress by detoxifying peroxides. This is Thiol peroxidase from Helicobacter pylori (strain J99 / ATCC 700824) (Campylobacter pylori J99).